Reading from the N-terminus, the 75-residue chain is Small ribosomal subunit protein bS18c (75 aa).

It belongs to the bacterial ribosomal protein bS18 family. Part of the 30S ribosomal subunit.

Its subcellular location is the plastid. It is found in the chloroplast. This is Small ribosomal subunit protein bS18c (rps18) from Marchantia polymorpha (Common liverwort).